The chain runs to 432 residues: Enolase (432 aa).

A (2R)-2-phosphoglycerate-binding site is contributed by glutamine 167. The Proton donor role is filled by glutamate 209. Positions 246, 290, and 317 each coordinate Mg(2+). (2R)-2-phosphoglycerate-binding residues include lysine 342, arginine 371, serine 372, and lysine 393. Lysine 342 serves as the catalytic Proton acceptor.

It belongs to the enolase family. Component of the RNA degradosome, a multiprotein complex involved in RNA processing and mRNA degradation. Mg(2+) serves as cofactor.

It localises to the cytoplasm. Its subcellular location is the secreted. The protein localises to the cell surface. The catalysed reaction is (2R)-2-phosphoglycerate = phosphoenolpyruvate + H2O. It participates in carbohydrate degradation; glycolysis; pyruvate from D-glyceraldehyde 3-phosphate: step 4/5. Its function is as follows. Catalyzes the reversible conversion of 2-phosphoglycerate (2-PG) into phosphoenolpyruvate (PEP). It is essential for the degradation of carbohydrates via glycolysis. In Cronobacter sakazakii (strain ATCC BAA-894) (Enterobacter sakazakii), this protein is Enolase.